A 319-amino-acid polypeptide reads, in one-letter code: Plasmodesmata-located protein 4 (319 aa).

Residues 1-26 (MVVHLISLLTQTLALIILSLPSIINT) form the signal peptide. Residues 27-288 (SQLDYDTLVF…EGSKVNTGKS (262 aa)) are Extracellular-facing. 6 cysteine pairs are disulfide-bonded: Cys-39-Cys-127, Cys-103-Cys-112, Cys-115-Cys-140, Cys-177-Cys-247, Cys-223-Cys-232, and Cys-235-Cys-260. Gnk2-homologous domains follow at residues 45–149 (NILQ…FERI) and 170–269 (HGLI…YHPH). A helical membrane pass occupies residues 289 to 309 (LAIVVGGVAALVFVAIFFMFL). The tract at residues 289-309 (LAIVVGGVAALVFVAIFFMFL) is necessary and sufficient for plasmodesmal targeting. Over 310–319 (KSLRKKGDDC) the chain is Cytoplasmic.

The protein belongs to the cysteine-rich repeat secretory protein family. Plasmodesmata-located proteins (PDLD) subfamily. (Microbial infection) Interacts with Grapevine fanleaf virus (GFLV) 2B-MP. As to expression, highly expressed in seeds and roots.

It is found in the cell membrane. The protein localises to the cell junction. Its subcellular location is the plasmodesma. In terms of biological role, modulates cell-to-cell trafficking. The chain is Plasmodesmata-located protein 4 from Arabidopsis thaliana (Mouse-ear cress).